Reading from the N-terminus, the 492-residue chain is UDP-N-acetylmuramyl-tripeptide synthetase 2 (492 aa).

Ser-30 serves as a coordination point for UDP-N-acetyl-alpha-D-muramoyl-L-alanyl-D-glutamate. Residue 111 to 117 (GTNGKTT) participates in ATP binding. Residues 154–155 (TT), Ser-181, Gln-187, and Arg-189 contribute to the UDP-N-acetyl-alpha-D-muramoyl-L-alanyl-D-glutamate site. At Lys-221 the chain carries N6-carboxylysine.

It belongs to the MurCDEF family. MurE subfamily. Post-translationally, carboxylation is probably crucial for Mg(2+) binding and, consequently, for the gamma-phosphate positioning of ATP.

The protein resides in the cytoplasm. It functions in the pathway cell wall biogenesis; peptidoglycan biosynthesis. Its function is as follows. Catalyzes the addition of an amino acid to the nucleotide precursor UDP-N-acetylmuramoyl-L-alanyl-D-glutamate (UMAG) in the biosynthesis of bacterial cell-wall peptidoglycan. The sequence is that of UDP-N-acetylmuramyl-tripeptide synthetase 2 from Oceanobacillus iheyensis (strain DSM 14371 / CIP 107618 / JCM 11309 / KCTC 3954 / HTE831).